The sequence spans 254 residues: Ubiquinone/menaquinone biosynthesis C-methyltransferase UbiE (254 aa).

Residues Thr77, Asp98, Asn126–Ala127, and Ser143 each bind S-adenosyl-L-methionine.

The protein belongs to the class I-like SAM-binding methyltransferase superfamily. MenG/UbiE family.

The enzyme catalyses a 2-demethylmenaquinol + S-adenosyl-L-methionine = a menaquinol + S-adenosyl-L-homocysteine + H(+). The catalysed reaction is a 2-methoxy-6-(all-trans-polyprenyl)benzene-1,4-diol + S-adenosyl-L-methionine = a 5-methoxy-2-methyl-3-(all-trans-polyprenyl)benzene-1,4-diol + S-adenosyl-L-homocysteine + H(+). It participates in quinol/quinone metabolism; menaquinone biosynthesis; menaquinol from 1,4-dihydroxy-2-naphthoate: step 2/2. It functions in the pathway cofactor biosynthesis; ubiquinone biosynthesis. Its function is as follows. Methyltransferase required for the conversion of demethylmenaquinol (DMKH2) to menaquinol (MKH2) and the conversion of 2-polyprenyl-6-methoxy-1,4-benzoquinol (DDMQH2) to 2-polyprenyl-3-methyl-6-methoxy-1,4-benzoquinol (DMQH2). This Hydrogenovibrio crunogenus (strain DSM 25203 / XCL-2) (Thiomicrospira crunogena) protein is Ubiquinone/menaquinone biosynthesis C-methyltransferase UbiE.